Reading from the N-terminus, the 567-residue chain is uncharacterized protein (567 aa).

10 consecutive transmembrane segments (helical) span residues 65 to 85 (LSLF…PSVA), 92 to 112 (LWYV…FFLI), 190 to 210 (WQWF…ACLP), 220 to 240 (VATY…LAYG), 302 to 322 (AIVM…IIVA), 353 to 373 (LGIL…ALIA), 412 to 432 (IISI…DAVF), 434 to 454 (VGAV…VFFT), 473 to 493 (IGLL…FPSV), and 503 to 523 (WTCL…AISA).

The protein belongs to the amino acid-polyamine-organocation (APC) superfamily.

It localises to the membrane. This is an uncharacterized protein from Schizosaccharomyces pombe (strain 972 / ATCC 24843) (Fission yeast).